The following is a 459-amino-acid chain: MSEMTARFSEIVGNANLLTGDAIPEDYAHDEELTGPPQKPAYAAKPATPEEVAQLLKAASENGVPVTARGSGCGLSGAARPVEGGLLISFDRMNKVLEVDTANQVAVVQPGVALTDLDAATADTGLRYTVYPGELSSSVGGNVGTNAGGMRAVKYGVARHNVLGLQAVLPTGEIIRTGGRMAKVSTGYDLTQLIIGSEGTLALVTEVIVKLHPRLDHNASVLAPFADFDQVMAAVPKILASGLAPDILEYIDNTSMAALISTQNLELGIPDQIRDSCEAYLLVALENRIADRLFEDIQTVGEMLMELGAVDAYVLEGGSARKLIEAREKAFWAAKALGADDIIDTVVPRASMPKFLSTARGLAAAADGAAVGCGHAGDGNVHMAIACKDPEKKKKLMTDIFALAMELGGAISGEHGVGRAKTGYFLELEDPVKISLMRRIKQSFDPAGILNPGVVFGDT.

Residues 28–47 (AHDEELTGPPQKPAYAAKPA) form a disordered region. Residues 35–214 (GPPQKPAYAA…TEVIVKLHPR (180 aa)) enclose the FAD-binding PCMH-type domain.

The protein belongs to the oxygen-dependent FAD-linked oxidoreductase family. The cofactor is FAD.

This is an uncharacterized protein from Mycobacterium tuberculosis (strain CDC 1551 / Oshkosh).